Consider the following 234-residue polypeptide: Carbohydrate deacetylase (234 aa).

Residues His-60 and His-123 each contribute to the Mg(2+) site.

Belongs to the YdjC deacetylase family. Requires Mg(2+) as cofactor.

Its function is as follows. Probably catalyzes the deacetylation of acetylated carbohydrates an important step in the degradation of oligosaccharides. The protein is Carbohydrate deacetylase of Bacillus anthracis.